A 147-amino-acid chain; its full sequence is uncharacterized protein (147 aa).

Residues 1–147 enclose the N-acetyltransferase domain; that stretch reads MEIRRADKDD…RPESGGSGSE (147 aa).

This sequence belongs to the acetyltransferase family.

This is an uncharacterized protein from Archaeoglobus fulgidus (strain ATCC 49558 / DSM 4304 / JCM 9628 / NBRC 100126 / VC-16).